The sequence spans 357 residues: Transcription factor HHO1 (357 aa).

Disordered regions lie at residues 94 to 117 (TSIE…ETDI) and 171 to 198 (NNNI…RKNR). Residues 96–109 (IEEEVDDKDDDDEE) are compositionally biased toward acidic residues. Positions 171-182 (NNNIKSPVTTSD) are enriched in polar residues. Positions 193–253 (GQRKNRRCWS…HLQKYRLHAR (61 aa)) constitute an HTH myb-type domain. Residues 224 to 249 (PKQIRDIMKVDGLTNDEVKSHLQKYR) constitute a DNA-binding region (H-T-H motif).

It localises to the nucleus. Probable factor involved in nitrate and phosphate signaling in roots. Integrates nitrate and phosphate starvation responses and adaptation of root architecture, depending on nutrient availabilities. Acts downstream of the nitrate sensor and transporter NPF6.3/NRT1.1. Represses primary root development in response to phosphate deficiency conditions, only when nitrate is present. The polypeptide is Transcription factor HHO1 (Arabidopsis thaliana (Mouse-ear cress)).